A 357-amino-acid chain; its full sequence is UDP-N-acetylglucosamine--N-acetylmuramyl-(pentapeptide) pyrophosphoryl-undecaprenol N-acetylglucosamine transferase (357 aa).

UDP-N-acetyl-alpha-D-glucosamine is bound by residues 14–16 (SGG), Asn-125, Ser-190, and Gln-290.

This sequence belongs to the glycosyltransferase 28 family. MurG subfamily.

It localises to the cell inner membrane. The catalysed reaction is di-trans,octa-cis-undecaprenyl diphospho-N-acetyl-alpha-D-muramoyl-L-alanyl-D-glutamyl-meso-2,6-diaminopimeloyl-D-alanyl-D-alanine + UDP-N-acetyl-alpha-D-glucosamine = di-trans,octa-cis-undecaprenyl diphospho-[N-acetyl-alpha-D-glucosaminyl-(1-&gt;4)]-N-acetyl-alpha-D-muramoyl-L-alanyl-D-glutamyl-meso-2,6-diaminopimeloyl-D-alanyl-D-alanine + UDP + H(+). It functions in the pathway cell wall biogenesis; peptidoglycan biosynthesis. Functionally, cell wall formation. Catalyzes the transfer of a GlcNAc subunit on undecaprenyl-pyrophosphoryl-MurNAc-pentapeptide (lipid intermediate I) to form undecaprenyl-pyrophosphoryl-MurNAc-(pentapeptide)GlcNAc (lipid intermediate II). This chain is UDP-N-acetylglucosamine--N-acetylmuramyl-(pentapeptide) pyrophosphoryl-undecaprenol N-acetylglucosamine transferase, found in Chlamydia felis (strain Fe/C-56) (Chlamydophila felis).